A 301-amino-acid polypeptide reads, in one-letter code: Probable alpha-L-glutamate ligase 1 (301 aa).

The ATP-grasp domain occupies 104-287 (LQLLSRKGIG…VTEPIVEYIE (184 aa)). ATP is bound by residues K141, 178–179 (EY), D187, and 211–213 (RSN). D248, E260, and N262 together coordinate Mg(2+). Mn(2+) is bound by residues D248, E260, and N262.

Belongs to the RimK family. Requires Mg(2+) as cofactor. The cofactor is Mn(2+).

This Shewanella sp. (strain W3-18-1) protein is Probable alpha-L-glutamate ligase 1.